The primary structure comprises 524 residues: Probable lipid II flippase MurJ (524 aa).

Transmembrane regions (helical) follow at residues 44–64 (IFGA…PNLL), 103–123 (LLTL…PWVI), 146–166 (ITFP…ILNT), 172–192 (IPAF…LFAA), 195–215 (FNPP…LQLV), 250–270 (ILGV…ASFL), 284–304 (LMEF…LPSL), 322–342 (WGLR…GILA), 367–387 (LIAY…APGF), 396–416 (PVKI…AFIG), 420–440 (HAGL…LLYW), 456–476 (WFLM…FGVL), and 494–514 (LMAV…VLGF).

This sequence belongs to the MurJ/MviN family.

Its subcellular location is the cell inner membrane. Its pathway is cell wall biogenesis; peptidoglycan biosynthesis. Functionally, involved in peptidoglycan biosynthesis. Transports lipid-linked peptidoglycan precursors from the inner to the outer leaflet of the cytoplasmic membrane. This chain is Probable lipid II flippase MurJ, found in Salmonella typhimurium (strain LT2 / SGSC1412 / ATCC 700720).